The primary structure comprises 298 residues: 4-hydroxy-tetrahydrodipicolinate synthase (298 aa).

A pyruvate-binding site is contributed by Thr51. Tyr140 functions as the Proton donor/acceptor in the catalytic mechanism. Lys168 (schiff-base intermediate with substrate) is an active-site residue. Pyruvate is bound at residue Ile210.

Belongs to the DapA family. Homotetramer; dimer of dimers.

The protein resides in the cytoplasm. It catalyses the reaction L-aspartate 4-semialdehyde + pyruvate = (2S,4S)-4-hydroxy-2,3,4,5-tetrahydrodipicolinate + H2O + H(+). Its pathway is amino-acid biosynthesis; L-lysine biosynthesis via DAP pathway; (S)-tetrahydrodipicolinate from L-aspartate: step 3/4. Its function is as follows. Catalyzes the condensation of (S)-aspartate-beta-semialdehyde [(S)-ASA] and pyruvate to 4-hydroxy-tetrahydrodipicolinate (HTPA). This Acidovorax sp. (strain JS42) protein is 4-hydroxy-tetrahydrodipicolinate synthase.